Here is a 335-residue protein sequence, read N- to C-terminus: D-alanine--D-alanine ligase (335 aa).

An ATP-grasp domain is found at 124 to 329 (KMWFSALGVP…FTHYLYSNIK (206 aa)). 154–209 (ALENWGSIFIKAASQGSSVGCYRVDSQDELVSSLEQAFSFSPYVIVEKTINARELE) provides a ligand contact to ATP. Asp283, Glu296, and Asn298 together coordinate Mg(2+).

The protein belongs to the D-alanine--D-alanine ligase family. It depends on Mg(2+) as a cofactor. Requires Mn(2+) as cofactor.

It is found in the cytoplasm. It carries out the reaction 2 D-alanine + ATP = D-alanyl-D-alanine + ADP + phosphate + H(+). Its pathway is cell wall biogenesis; peptidoglycan biosynthesis. Cell wall formation. The protein is D-alanine--D-alanine ligase of Shewanella woodyi (strain ATCC 51908 / MS32).